Here is a 258-residue protein sequence, read N- to C-terminus: Imidazole glycerol phosphate synthase subunit HisF (258 aa).

Residues Asp11 and Asp130 contribute to the active site.

The protein belongs to the HisA/HisF family. Heterodimer of HisH and HisF.

Its subcellular location is the cytoplasm. It carries out the reaction 5-[(5-phospho-1-deoxy-D-ribulos-1-ylimino)methylamino]-1-(5-phospho-beta-D-ribosyl)imidazole-4-carboxamide + L-glutamine = D-erythro-1-(imidazol-4-yl)glycerol 3-phosphate + 5-amino-1-(5-phospho-beta-D-ribosyl)imidazole-4-carboxamide + L-glutamate + H(+). Its pathway is amino-acid biosynthesis; L-histidine biosynthesis; L-histidine from 5-phospho-alpha-D-ribose 1-diphosphate: step 5/9. Its function is as follows. IGPS catalyzes the conversion of PRFAR and glutamine to IGP, AICAR and glutamate. The HisF subunit catalyzes the cyclization activity that produces IGP and AICAR from PRFAR using the ammonia provided by the HisH subunit. The sequence is that of Imidazole glycerol phosphate synthase subunit HisF from Xanthomonas oryzae pv. oryzae (strain MAFF 311018).